The primary structure comprises 102 residues: ATP-dependent Clp protease adapter protein ClpS (102 aa).

This sequence belongs to the ClpS family. In terms of assembly, binds to the N-terminal domain of the chaperone ClpA.

In terms of biological role, involved in the modulation of the specificity of the ClpAP-mediated ATP-dependent protein degradation. The chain is ATP-dependent Clp protease adapter protein ClpS from Dechloromonas aromatica (strain RCB).